Consider the following 928-residue polypeptide: Nitrogen network kinase 1 (928 aa).

Positions 1–12 (MFTSQRQLRQNG) are enriched in polar residues. 2 disordered regions span residues 1–43 (MFTS…SYGR) and 81–118 (HEHPSRSTLVQLQTRSQPDDVASSQVNPEGGTDDLELG). A compositionally biased stretch (low complexity) spans 13-29 (SPMSSSRSSQHSSGTAS). 2 stretches are compositionally biased toward polar residues: residues 30–40 (PISDSPASNRS) and 86–107 (RSTLVQLQTRSQPDDVASSQVN). 2 positions are modified to phosphoserine: serine 178 and serine 179. The disordered stretch occupies residues 374–394 (ANDDNINSRNTPNNSNDTYVN). Positions 375-391 (NDDNINSRNTPNNSNDT) are enriched in low complexity. Phosphoserine occurs at positions 405 and 426. One can recognise a Protein kinase domain in the interval 449–912 (HRLGKIIGFG…WKLKRIEEVL (464 aa)). Residues 455–463 (IGFGAWGII) and lysine 478 each bind ATP. Catalysis depends on aspartate 580, which acts as the Proton acceptor. Disordered regions lie at residues 670–741 (ENRK…KYIG) and 767–813 (YDSP…SGSS). Polar residues predominate over residues 683–696 (VSSSSHSLKHLNQP). Position 737 is a phosphoserine (serine 737). The residue at position 739 (tyrosine 739) is a Phosphotyrosine. The span at 769 to 813 (SPDSSQSEISAASSSSSNLSSLSSSTKASAVTNSGVTTSSPSGSS) shows a compositional bias: low complexity.

It belongs to the protein kinase superfamily. Ser/Thr protein kinase family. In terms of assembly, interacts with URE2 and GDH2. Also interacts with the TORC1 kinase complex.

The protein localises to the cytoplasm. It catalyses the reaction L-seryl-[protein] + ATP = O-phospho-L-seryl-[protein] + ADP + H(+). The enzyme catalyses L-threonyl-[protein] + ATP = O-phospho-L-threonyl-[protein] + ADP + H(+). Functionally, serine/threonine-protein kinase involved in the phosphorylation of the NAD(+)-dependent glutamate dehydrogenase GDH2. When overexpressed, confers hypersensitivity to rapamycin and induces rapid nuclear accumulation of GLN3 to activate the transcription of nitrogen-regulated genes. This is Nitrogen network kinase 1 (NNK1) from Saccharomyces cerevisiae (strain ATCC 204508 / S288c) (Baker's yeast).